A 117-amino-acid chain; its full sequence is Immunoglobulin heavy variable 1-58 (117 aa).

Positions 1–19 are cleaved as a signal peptide; that stretch reads MDWIWRILFLVGAATGAHS. Residues 20–44 are framework-1; that stretch reads QMQLVQSGPEVKKPGTSVKVSCKAS. Positions 20–117 constitute an Ig-like domain; the sequence is QMQLVQSGPE…EDTAVYYCAA (98 aa). A disulfide bridge connects residues Cys41 and Cys115. The tract at residues 45–52 is complementarity-determining-1; that stretch reads GFTFTSSA. The interval 53 to 69 is framework-2; the sequence is VQWVRQARGQRLEWIGW. Residues 70–77 are complementarity-determining-2; sequence IVVGSGNT. The segment at 78–115 is framework-3; it reads NYAQKFQERVTITRDMSTSTAYMELSSLRSEDTAVYYC. A complementarity-determining-3 region spans residues 116-117; it reads AA.

As to quaternary structure, immunoglobulins are composed of two identical heavy chains and two identical light chains; disulfide-linked.

The protein resides in the secreted. The protein localises to the cell membrane. In terms of biological role, v region of the variable domain of immunoglobulin heavy chains that participates in the antigen recognition. Immunoglobulins, also known as antibodies, are membrane-bound or secreted glycoproteins produced by B lymphocytes. In the recognition phase of humoral immunity, the membrane-bound immunoglobulins serve as receptors which, upon binding of a specific antigen, trigger the clonal expansion and differentiation of B lymphocytes into immunoglobulins-secreting plasma cells. Secreted immunoglobulins mediate the effector phase of humoral immunity, which results in the elimination of bound antigens. The antigen binding site is formed by the variable domain of one heavy chain, together with that of its associated light chain. Thus, each immunoglobulin has two antigen binding sites with remarkable affinity for a particular antigen. The variable domains are assembled by a process called V-(D)-J rearrangement and can then be subjected to somatic hypermutations which, after exposure to antigen and selection, allow affinity maturation for a particular antigen. The polypeptide is Immunoglobulin heavy variable 1-58 (Homo sapiens (Human)).